The primary structure comprises 215 residues: ATP-dependent Clp protease proteolytic subunit 1 (215 aa).

Ser-111 acts as the Nucleophile in catalysis. His-136 is an active-site residue.

This sequence belongs to the peptidase S14 family. As to quaternary structure, fourteen ClpP subunits assemble into 2 heptameric rings which stack back to back to give a disk-like structure with a central cavity, resembling the structure of eukaryotic proteasomes.

It is found in the cytoplasm. It carries out the reaction Hydrolysis of proteins to small peptides in the presence of ATP and magnesium. alpha-casein is the usual test substrate. In the absence of ATP, only oligopeptides shorter than five residues are hydrolyzed (such as succinyl-Leu-Tyr-|-NHMec, and Leu-Tyr-Leu-|-Tyr-Trp, in which cleavage of the -Tyr-|-Leu- and -Tyr-|-Trp bonds also occurs).. In terms of biological role, cleaves peptides in various proteins in a process that requires ATP hydrolysis. Has a chymotrypsin-like activity. Plays a major role in the degradation of misfolded proteins. This is ATP-dependent Clp protease proteolytic subunit 1 from Gluconobacter oxydans (strain 621H) (Gluconobacter suboxydans).